The primary structure comprises 175 residues: Large ribosomal subunit protein uL10 (175 aa).

This sequence belongs to the universal ribosomal protein uL10 family. In terms of assembly, part of the ribosomal stalk of the 50S ribosomal subunit. The N-terminus interacts with L11 and the large rRNA to form the base of the stalk. The C-terminus forms an elongated spine to which L12 dimers bind in a sequential fashion forming a multimeric L10(L12)X complex.

In terms of biological role, forms part of the ribosomal stalk, playing a central role in the interaction of the ribosome with GTP-bound translation factors. The chain is Large ribosomal subunit protein uL10 from Mycobacterium sp. (strain JLS).